A 140-amino-acid polypeptide reads, in one-letter code: Large ribosomal subunit protein uL14 (140 aa).

Ser17 carries the phosphoserine modification. A Phosphotyrosine modification is found at Tyr38.

This sequence belongs to the universal ribosomal protein uL14 family. Component of the large ribosomal subunit.

It is found in the cytoplasm. Its function is as follows. Component of the large ribosomal subunit. The ribosome is a large ribonucleoprotein complex responsible for the synthesis of proteins in the cell. This Pongo abelii (Sumatran orangutan) protein is Large ribosomal subunit protein uL14 (RPL23).